The following is a 441-amino-acid chain: Glutamate--tRNA ligase 1 (441 aa).

A 'HIGH' region motif is present at residues Pro-9–Asn-19. The 'KMSKS' region motif lies at Ala-239–Arg-243. Residue Lys-242 coordinates ATP.

Belongs to the class-I aminoacyl-tRNA synthetase family. Glutamate--tRNA ligase type 1 subfamily. As to quaternary structure, monomer.

The protein resides in the cytoplasm. It carries out the reaction tRNA(Glu) + L-glutamate + ATP = L-glutamyl-tRNA(Glu) + AMP + diphosphate. Its function is as follows. Catalyzes the attachment of glutamate to tRNA(Glu) in a two-step reaction: glutamate is first activated by ATP to form Glu-AMP and then transferred to the acceptor end of tRNA(Glu). The sequence is that of Glutamate--tRNA ligase 1 from Cereibacter sphaeroides (strain ATCC 17025 / ATH 2.4.3) (Rhodobacter sphaeroides).